Reading from the N-terminus, the 324-residue chain is 2-oxoisovalerate dehydrogenase subunit beta (324 aa).

Thiamine diphosphate-binding positions include E29, 58 to 60 (LSE), Q82, and 86 to 89 (YIFP). Substrate contacts are provided by residues 83 to 86 (FADY) and H129. H129 functions as the Proton acceptor in the catalytic mechanism.

In terms of assembly, heterotetramer of two alpha and two beta chains. Directly associated with ODBA in the E1 complex. The cofactor is thiamine diphosphate.

The catalysed reaction is N(6)-[(R)-lipoyl]-L-lysyl-[protein] + 3-methyl-2-oxobutanoate + H(+) = N(6)-[(R)-S(8)-2-methylpropanoyldihydrolipoyl]-L-lysyl-[protein] + CO2. The branched-chain alpha-keto dehydrogenase complex catalyzes the overall conversion of alpha-keto acids to acyl-CoA and CO(2). It contains multiple copies of three enzymatic components: branched-chain alpha-keto acid decarboxylase (E1), lipoamide acyltransferase (E2) and lipoamide dehydrogenase (E3). This is 2-oxoisovalerate dehydrogenase subunit beta from Thermus thermophilus (strain ATCC BAA-163 / DSM 7039 / HB27).